A 497-amino-acid chain; its full sequence is Arabinose import ATP-binding protein AraG (497 aa).

ABC transporter domains follow at residues 6-242 (LRFD…MVGR) and 250-497 (FRPR…ALPA). 38-45 (GENGAGKS) lines the ATP pocket.

Belongs to the ABC transporter superfamily. Arabinose importer (TC 3.A.1.2.2) family. As to quaternary structure, the complex is composed of two ATP-binding proteins (AraG), two transmembrane proteins (AraH) and a solute-binding protein (AraF).

The protein localises to the cell inner membrane. It catalyses the reaction L-arabinose(out) + ATP + H2O = L-arabinose(in) + ADP + phosphate + H(+). Part of the ABC transporter complex AraFGH involved in arabinose import. Responsible for energy coupling to the transport system. In Chromohalobacter salexigens (strain ATCC BAA-138 / DSM 3043 / CIP 106854 / NCIMB 13768 / 1H11), this protein is Arabinose import ATP-binding protein AraG.